We begin with the raw amino-acid sequence, 313 residues long: Olfactory receptor 51A2 (313 aa).

Over 1-27 (MSIINTSYVEITTFFLVGMPGLEYAHI) the chain is Extracellular. Residue Asn5 is glycosylated (N-linked (GlcNAc...) asparagine). The chain crosses the membrane as a helical span at residues 28–48 (WISIPICSMYLIAILGNGTIL). Residues 49–56 (FIIKTEPS) lie on the Cytoplasmic side of the membrane. Residues 57 to 77 (LHGPMYYFLSMLAMSDLGLSL) form a helical membrane-spanning segment. Residues 78-101 (SSLPTVLSIFLFNAPETSSSACFA) lie on the Extracellular side of the membrane. Cys99 and Cys191 are joined by a disulfide. The chain crosses the membrane as a helical span at residues 102–122 (QEFFIHGFSVLESSVLLIMSF). Topologically, residues 123 to 141 (DRFLAIHNPLRYTSILTTV) are cytoplasmic. The helical transmembrane segment at 142-162 (RVAQIGIVFSFKSMLLVLPFP) threads the bilayer. Residues 163–198 (FTLRSLRYCKKNQLSHSYCLHQDVMKLACSDNRIDV) lie on the Extracellular side of the membrane. Residues 199 to 218 (IYGFFGALCLMVDFILIAVS) form a helical membrane-spanning segment. Topologically, residues 219–238 (YTLILKTVPGIASKKEELKA) are cytoplasmic. Residues 239 to 259 (LNTCVSHICAVIIFYLPIINL) traverse the membrane as a helical segment. Residues 260–274 (AVVHRFAGHVSPLIN) lie on the Extracellular side of the membrane. A helical membrane pass occupies residues 275–295 (VLMANVLLLVPPLMKPIVYCV). The Cytoplasmic segment spans residues 296–313 (KTKQIRVRVVAKLCQWKI).

It belongs to the G-protein coupled receptor 1 family.

The protein localises to the cell membrane. Odorant receptor. The polypeptide is Olfactory receptor 51A2 (OR51A2) (Homo sapiens (Human)).